A 538-amino-acid polypeptide reads, in one-letter code: Phospho-2-dehydro-3-deoxyheptonate aldolase 1, chloroplastic (538 aa).

A chloroplast-targeting transit peptide spans M1–A74. The segment at D55–P82 is disordered. Low complexity predominate over residues K68–P82. T75 is modified (blocked amino end (Thr)).

Belongs to the class-II DAHP synthase family.

It localises to the plastid. The protein resides in the chloroplast. It catalyses the reaction D-erythrose 4-phosphate + phosphoenolpyruvate + H2O = 7-phospho-2-dehydro-3-deoxy-D-arabino-heptonate + phosphate. It functions in the pathway metabolic intermediate biosynthesis; chorismate biosynthesis; chorismate from D-erythrose 4-phosphate and phosphoenolpyruvate: step 1/7. Its activity is regulated as follows. Activation by tryptophan (a hysteretic factor). The protein is Phospho-2-dehydro-3-deoxyheptonate aldolase 1, chloroplastic (SHKA) of Solanum tuberosum (Potato).